Reading from the N-terminus, the 251-residue chain is 3-deoxy-manno-octulosonate cytidylyltransferase (251 aa).

The protein belongs to the KdsB family.

It is found in the cytoplasm. It carries out the reaction 3-deoxy-alpha-D-manno-oct-2-ulosonate + CTP = CMP-3-deoxy-beta-D-manno-octulosonate + diphosphate. It participates in nucleotide-sugar biosynthesis; CMP-3-deoxy-D-manno-octulosonate biosynthesis; CMP-3-deoxy-D-manno-octulosonate from 3-deoxy-D-manno-octulosonate and CTP: step 1/1. Its pathway is bacterial outer membrane biogenesis; lipopolysaccharide biosynthesis. In terms of biological role, activates KDO (a required 8-carbon sugar) for incorporation into bacterial lipopolysaccharide in Gram-negative bacteria. The protein is 3-deoxy-manno-octulosonate cytidylyltransferase of Vibrio vulnificus (strain YJ016).